We begin with the raw amino-acid sequence, 221 residues long: Thiamine-phosphate synthase (221 aa).

4-amino-2-methyl-5-(diphosphooxymethyl)pyrimidine contacts are provided by residues 49-53 and Asn85; that span reads QFREK. Positions 86 and 105 each coordinate Mg(2+). Residue Ser124 coordinates 4-amino-2-methyl-5-(diphosphooxymethyl)pyrimidine. Residue 151 to 153 participates in 2-[(2R,5Z)-2-carboxy-4-methylthiazol-5(2H)-ylidene]ethyl phosphate binding; sequence TQS. Lys154 is a 4-amino-2-methyl-5-(diphosphooxymethyl)pyrimidine binding site. 2-[(2R,5Z)-2-carboxy-4-methylthiazol-5(2H)-ylidene]ethyl phosphate contacts are provided by residues Gly183 and 203 to 204; that span reads IS.

It belongs to the thiamine-phosphate synthase family. It depends on Mg(2+) as a cofactor.

It catalyses the reaction 2-[(2R,5Z)-2-carboxy-4-methylthiazol-5(2H)-ylidene]ethyl phosphate + 4-amino-2-methyl-5-(diphosphooxymethyl)pyrimidine + 2 H(+) = thiamine phosphate + CO2 + diphosphate. The enzyme catalyses 2-(2-carboxy-4-methylthiazol-5-yl)ethyl phosphate + 4-amino-2-methyl-5-(diphosphooxymethyl)pyrimidine + 2 H(+) = thiamine phosphate + CO2 + diphosphate. The catalysed reaction is 4-methyl-5-(2-phosphooxyethyl)-thiazole + 4-amino-2-methyl-5-(diphosphooxymethyl)pyrimidine + H(+) = thiamine phosphate + diphosphate. The protein operates within cofactor biosynthesis; thiamine diphosphate biosynthesis; thiamine phosphate from 4-amino-2-methyl-5-diphosphomethylpyrimidine and 4-methyl-5-(2-phosphoethyl)-thiazole: step 1/1. In terms of biological role, condenses 4-methyl-5-(beta-hydroxyethyl)thiazole monophosphate (THZ-P) and 2-methyl-4-amino-5-hydroxymethyl pyrimidine pyrophosphate (HMP-PP) to form thiamine monophosphate (TMP). This chain is Thiamine-phosphate synthase, found in Histophilus somni (strain 129Pt) (Haemophilus somnus).